Reading from the N-terminus, the 732-residue chain is Formin-homology and zinc finger domains protein 1 (732 aa).

Low complexity-rich tracts occupy residues 1–12 (MMLASSAPTAPS), 19–45 (QPSA…SDAS), 121–137 (QQQQ…QSSS), and 240–251 (SSPKSPTSPTQP). The N-terminal stretch at 1 to 27 (MMLASSAPTAPSLLPPSSQPSAATTRA) is a signal peptide. Disordered stretches follow at residues 1–45 (MMLA…SDAS), 121–141 (QQQQ…SDRK), and 232–267 (RGRP…RRNT). Residues 256-267 (SQASSLPSRRNT) are compositionally biased toward polar residues. An FH2 domain is found at 355-732 (PISLSSSIIP…DDHHINVSSP (378 aa)).

Belongs to the formin homology family. Transiently expressed in all mesoderm derived progenitor body wall muscle cells before they differentiate.

Functionally, acts redundantly with hlh-1 to promote body wall muscle cell and coelomocyte specification in postembryonic mesoderm progenitors, probably through suppression of sem-2. In Caenorhabditis elegans, this protein is Formin-homology and zinc finger domains protein 1.